A 459-amino-acid chain; its full sequence is tRNA modification GTPase MnmE (459 aa).

Positions 23, 88, and 127 each coordinate (6S)-5-formyl-5,6,7,8-tetrahydrofolate. Residues 223–381 (GLSVVIVGKP…IKNCIKELFF (159 aa)) enclose the TrmE-type G domain. Asn-233 contributes to the K(+) binding site. GTP contacts are provided by residues 233-238 (NVGKSS), 252-258 (TDIPGTT), and 277-280 (DTAG). Position 237 (Ser-237) interacts with Mg(2+). Thr-252, Ile-254, and Thr-257 together coordinate K(+). Residue Thr-258 participates in Mg(2+) binding. Residue Lys-459 coordinates (6S)-5-formyl-5,6,7,8-tetrahydrofolate.

The protein belongs to the TRAFAC class TrmE-Era-EngA-EngB-Septin-like GTPase superfamily. TrmE GTPase family. In terms of assembly, homodimer. Heterotetramer of two MnmE and two MnmG subunits. It depends on K(+) as a cofactor.

It localises to the cytoplasm. Exhibits a very high intrinsic GTPase hydrolysis rate. Involved in the addition of a carboxymethylaminomethyl (cmnm) group at the wobble position (U34) of certain tRNAs, forming tRNA-cmnm(5)s(2)U34. This chain is tRNA modification GTPase MnmE, found in Clostridium kluyveri (strain ATCC 8527 / DSM 555 / NBRC 12016 / NCIMB 10680 / K1).